We begin with the raw amino-acid sequence, 260 residues long: Methylphosphonate hydroxylase (260 aa).

Lys107 is a 2-oxoglutarate binding site. 3 residues coordinate Fe cation: His117, Asp119, and His195.

It belongs to the PhyH family. Fe(2+) serves as cofactor.

It catalyses the reaction methylphosphonate + 2-oxoglutarate + O2 = hydroxymethylphosphonate + succinate + CO2. Functionally, part of an oxidative pathway for utilization of methylphosphonic acid as a phosphate source. Catalyzes the conversion of methylphosphonic acid to hydroxymethylphosphonic acid. Is specific for the hydroxylation of methylphosphonate. This is Methylphosphonate hydroxylase from Gimesia maris (strain ATCC 29201 / DSM 8797 / 534-30) (Planctomyces maris).